The primary structure comprises 563 residues: Arginine--tRNA ligase (563 aa).

The 'HIGH' region motif lies at 121–131 (PNIAKPFSIGH).

Belongs to the class-I aminoacyl-tRNA synthetase family. Monomer.

Its subcellular location is the cytoplasm. The catalysed reaction is tRNA(Arg) + L-arginine + ATP = L-arginyl-tRNA(Arg) + AMP + diphosphate. The chain is Arginine--tRNA ligase from Streptococcus agalactiae serotype Ia (strain ATCC 27591 / A909 / CDC SS700).